A 608-amino-acid chain; its full sequence is Histone-arginine methyltransferase CARM1 (608 aa).

Residues alanine 28–serine 139 are interaction with C9orf72. The SAM-dependent MTase PRMT-type domain occupies alanine 147–valine 454. 4 residues coordinate S-adenosyl-L-methionine: glutamine 160, arginine 169, glycine 193, and glutamate 215. Phosphoserine is present on serine 217. A Glycyl lysine isopeptide (Lys-Gly) (interchain with G-Cter in ubiquitin) cross-link involves residue lysine 228. S-adenosyl-L-methionine-binding residues include glutamate 244 and serine 272. Positions arginine 347–leucine 380 are required for nuclear translocation. Positions threonine 500–serine 608 are transactivation domain. Arginine 551 carries the dimethylated arginine modification.

This sequence belongs to the class I-like SAM-binding methyltransferase superfamily. Protein arginine N-methyltransferase family. In terms of assembly, homodimer. Interacts with NR1H4. Interacts with SNRPC. Interacts with the C-terminus of NCOA2/GRIP1, NCO3/ACTR and NCOA1/SRC1. Part of a complex consisting of CARM1, EP300/P300 and NCOA2/GRIP1. Interacts with FLII, TP53, myogenic factor MEF2, EP300/P300, TRIM24, CREBBP and CTNNB1. Interacts with RELA. Identified in a complex containing CARM1, TRIM24 and NCOA2/GRIP1. Interacts with NCOA3/SRC3. Interacts with SKP2. Interacts (via PH domain-like fold) with C9orf72. Interacts with PARP1; promoting PARP1 recruimtent to replication forks. Phosphorylation at Ser-217 is strongly increased during mitosis, and decreases rapidly to a very low, basal level after entry into the G1 phase of the cell cycle. Phosphorylation at Ser-217 interferes with S-adenosyl-L-methionine binding and strongly reduces methyltransferase activity. Phosphorylation at Ser-217 may promote cytosolic location. Post-translationally, auto-methylated on Arg-551. Methylation enhances transcription coactivator activity. Methylation is required for its role in the regulation of pre-mRNA alternative splicing. In terms of processing, ubiquitinated by E3 ubiquitin-protein ligase complex containing FBXO9 at Lys-228; leading to proteasomal degradation. Ubiquitously expressed. Within the brain, present in proliferating cells from lateral ventricular zone and dentate gyrus (at protein level).

The protein resides in the nucleus. The protein localises to the cytoplasm. It localises to the chromosome. It carries out the reaction L-arginyl-[protein] + 2 S-adenosyl-L-methionine = N(omega),N(omega)-dimethyl-L-arginyl-[protein] + 2 S-adenosyl-L-homocysteine + 2 H(+). Methylation of H3R17 (H3R17me) by CARM1 is stimulated by preacetylation of H3 'Lys-18' (H3K18ac) H3 'Lys-23' (H3K23ac) by EP300 and blocked by citrullination of H3 'Arg-17' (H3R17ci) by PADI4. Methylates (mono- and asymmetric dimethylation) the guanidino nitrogens of arginyl residues in several proteins involved in DNA packaging, transcription regulation, pre-mRNA splicing, and mRNA stability. Recruited to promoters upon gene activation together with histone acetyltransferases from EP300/P300 and p160 families, methylates histone H3 at 'Arg-17' (H3R17me), forming mainly asymmetric dimethylarginine (H3R17me2a), leading to activation of transcription via chromatin remodeling. During nuclear hormone receptor activation and TCF7L2/TCF4 activation, acts synergically with EP300/P300 and either one of the p160 histone acetyltransferases NCOA1/SRC1, NCOA2/GRIP1 and NCOA3/ACTR or CTNNB1/beta-catenin to activate transcription. During myogenic transcriptional activation, acts together with NCOA3/ACTR as a coactivator for MEF2C. During monocyte inflammatory stimulation, acts together with EP300/P300 as a coactivator for NF-kappa-B. Acts as a coactivator for PPARG, promotes adipocyte differentiation and the accumulation of brown fat tissue. Plays a role in the regulation of pre-mRNA alternative splicing by methylation of splicing factors. Also seems to be involved in p53/TP53 transcriptional activation. Methylates EP300/P300, both at 'Arg-2142', which may loosen its interaction with NCOA2/GRIP1, and at 'Arg-580' and 'Arg-604' in the KIX domain, which impairs its interaction with CREB and inhibits CREB-dependent transcriptional activation. Also methylates arginine residues in RNA-binding proteins PABPC1, ELAVL1 and ELAV4, which may affect their mRNA-stabilizing properties and the half-life of their target mRNAs. Acts as a transcriptional coactivator of ACACA/acetyl-CoA carboxylase by enriching H3R17 methylation at its promoter, thereby positively regulating fatty acid synthesis. Independently of its methyltransferase activity, involved in replication fork progression: promotes PARP1 recruitment to replication forks, leading to poly-ADP-ribosylation of chromatin at replication forks and reduced fork speed. This Mus musculus (Mouse) protein is Histone-arginine methyltransferase CARM1 (Carm1).